Consider the following 827-residue polypeptide: NT-3 growth factor receptor (827 aa).

The N-terminal stretch at 1–31 is a signal peptide; sequence MDVSLCPTKCTFWRVFLLWSIWGDYLLSVLA. 2 disulfides stabilise this stretch: C32–C38 and C36–C45. At 32 to 430 the chain is on the extracellular side; it reads CPANCLCSKT…ITVTHKPEED (399 aa). 3 N-linked (GlcNAc...) asparagine glycosylation sites follow: N68, N72, and N79. LRR repeat units lie at residues 104-125 and 128-149; these read GLQRLTIRNSGLRNIQPRAFAK and HLRYIDLSGNRLTTLSWQLFQT. An LRRCT domain is found at 160–209; it reads NPFNCSCDIRWIQLWQEKGEANLQSQQLHCMNLDTAVILLRNMNITQCDL. Residue N163 is glycosylated (N-linked (GlcNAc...) asparagine). 2 cysteine pairs are disulfide-bonded: C164–C189 and C166–C207. N203, N218, N232, N259, N267, N272, and N294 each carry an N-linked (GlcNAc...) asparagine glycan. Ig-like C2-type domains lie at 210–300 and 319–382; these read PEIS…VLLT and HCIA…VATN. Residues C231 and C284 are joined by a disulfide bond. C320 and C362 are disulfide-bonded. N-linked (GlcNAc...) asparagine glycans are attached at residues N375 and N388. The chain crosses the membrane as a helical span at residues 431-455; the sequence is TFGVSIAVGLAAFACVLLVVLFIMI. Residues 456 to 827 lie on the Cytoplasmic side of the membrane; the sequence is NKYGRRSKFG…ATPIYLDILG (372 aa). Y518 carries the post-translational modification Phosphotyrosine; by autocatalysis. A Protein kinase domain is found at 540–812; it reads IVLKRELGEG…LNIKEIYKIL (273 aa). ATP-binding positions include 546–554 and K574; that span reads LGEGAFGKV. The active-site Proton acceptor is the D681. Phosphotyrosine; by autocatalysis is present on residues Y707, Y711, Y712, and Y822.

Belongs to the protein kinase superfamily. Tyr protein kinase family. Insulin receptor subfamily. As to quaternary structure, exists in a dynamic equilibrium between monomeric (low affinity) and dimeric (high affinity) structures. Interacts with PTPRS. Post-translationally, ligand-mediated auto-phosphorylation.

It localises to the membrane. It carries out the reaction L-tyrosyl-[protein] + ATP = O-phospho-L-tyrosyl-[protein] + ADP + H(+). In terms of biological role, receptor tyrosine kinase involved in nervous system and probably heart development. Upon binding of its ligand NTF3/neurotrophin-3, NTRK3 autophosphorylates and activates different signaling pathways, including the phosphatidylinositol 3-kinase/AKT and the MAPK pathways, that control cell survival and differentiation. The KT and KD isoforms fail to stimulate transformation, process outgrowth or survival. Isoform KI25 exhibits tyrosine phosphorylation in the absence of ligand and is unable to mediate survival of neuronal cells. This chain is NT-3 growth factor receptor (NTRK3), found in Gallus gallus (Chicken).